The sequence spans 389 residues: Monomeric sarcosine oxidase (389 aa).

D8–F38 lines the FAD pocket. S-8alpha-FAD cysteine is present on C318.

This sequence belongs to the MSOX/MTOX family. MSOX subfamily. As to quaternary structure, monomer. FAD serves as cofactor.

Its subcellular location is the cytoplasm. It catalyses the reaction sarcosine + O2 + H2O = formaldehyde + glycine + H2O2. Functionally, catalyzes the oxidative demethylation of sarcosine. The polypeptide is Monomeric sarcosine oxidase (soxA) (Arthrobacter sp. (strain TE1826)).